A 1308-amino-acid chain; its full sequence is Spermatogenesis-associated protein 31F1B (1308 aa).

The helical transmembrane segment at 7-27 (FLWDTECPLYVYFCFFIIVLI) threads the bilayer. 7 disordered regions span residues 464–488 (SPPI…LDEP), 627–648 (SQPG…AGKG), 844–863 (HGAQ…QPLL), 902–927 (PTAT…LLQG), 1005–1026 (FSTE…VAGK), 1084–1190 (GACP…AGLK), and 1204–1254 (MKSK…PKAQ). Pro residues predominate over residues 465-478 (PPIPLPEAAPPPSS). Positions 1107-1117 (METDSEQDMED) are enriched in acidic residues.

Belongs to the SPATA31 family.

Its subcellular location is the membrane. The sequence is that of Spermatogenesis-associated protein 31F1B from Mus musculus (Mouse).